Consider the following 445-residue polypeptide: Proline--tRNA ligase (445 aa).

Belongs to the class-II aminoacyl-tRNA synthetase family. ProS type 2 subfamily. Homodimer.

Its subcellular location is the cytoplasm. It catalyses the reaction tRNA(Pro) + L-proline + ATP = L-prolyl-tRNA(Pro) + AMP + diphosphate. In terms of biological role, catalyzes the attachment of proline to tRNA(Pro) in a two-step reaction: proline is first activated by ATP to form Pro-AMP and then transferred to the acceptor end of tRNA(Pro). The chain is Proline--tRNA ligase from Cereibacter sphaeroides (strain ATCC 17029 / ATH 2.4.9) (Rhodobacter sphaeroides).